Here is a 470-residue protein sequence, read N- to C-terminus: 3-isopropylmalate dehydratase large subunit (470 aa).

The interval 50 to 121 (NVARGCQHRH…PCGRPGAGRH (72 aa)) is disordered. Residues Cys-349, Cys-409, and Cys-412 each coordinate [4Fe-4S] cluster.

Belongs to the aconitase/IPM isomerase family. LeuC type 1 subfamily. Heterodimer of LeuC and LeuD. Requires [4Fe-4S] cluster as cofactor.

It carries out the reaction (2R,3S)-3-isopropylmalate = (2S)-2-isopropylmalate. Its pathway is amino-acid biosynthesis; L-leucine biosynthesis; L-leucine from 3-methyl-2-oxobutanoate: step 2/4. Catalyzes the isomerization between 2-isopropylmalate and 3-isopropylmalate, via the formation of 2-isopropylmaleate. The chain is 3-isopropylmalate dehydratase large subunit from Azotobacter vinelandii.